The primary structure comprises 239 residues: Ribonuclease PH (239 aa).

Phosphate-binding positions include Arg86 and 124–126 (GTR).

It belongs to the RNase PH family. Homohexameric ring arranged as a trimer of dimers.

The enzyme catalyses tRNA(n+1) + phosphate = tRNA(n) + a ribonucleoside 5'-diphosphate. Its function is as follows. Phosphorolytic 3'-5' exoribonuclease that plays an important role in tRNA 3'-end maturation. Removes nucleotide residues following the 3'-CCA terminus of tRNAs; can also add nucleotides to the ends of RNA molecules by using nucleoside diphosphates as substrates, but this may not be physiologically important. Probably plays a role in initiation of 16S rRNA degradation (leading to ribosome degradation) during starvation. This Rickettsia bellii (strain OSU 85-389) protein is Ribonuclease PH.